We begin with the raw amino-acid sequence, 215 residues long: uncharacterized protein (215 aa).

Disordered stretches follow at residues 1 to 144 (MPKG…PYLR) and 156 to 215 (IQGH…GAPA). Low complexity-rich tracts occupy residues 16–29 (ASTPSRSSWPASPT), 49–58 (SSSWPKSPIK), 85–96 (SGSSSPGPSSSR), and 104–127 (STAASSRSPATSARSTSSCPRAAP).

This is an uncharacterized protein from Homo sapiens (Human).